A 423-amino-acid polypeptide reads, in one-letter code: Cytochrome c biogenesis protein Ccs1 (423 aa).

3 helical membrane passes run 11 to 31 (LKFA…GSII), 70 to 90 (NFWF…CTFF), and 153 to 173 (IAPV…IFAS).

The protein belongs to the Ccs1/CcsB family. In terms of assembly, may interact with CcsA.

The protein resides in the plastid. The protein localises to the chloroplast thylakoid membrane. Its function is as follows. Required during biogenesis of c-type cytochromes (cytochrome c6 and cytochrome f) at the step of heme attachment. The chain is Cytochrome c biogenesis protein Ccs1 from Heterosigma akashiwo (strain NIES-293 / 8280G21-1).